A 502-amino-acid polypeptide reads, in one-letter code: Glutamate--tRNA ligase (502 aa).

The short motif at 21 to 31 (PSPTGVPHVGM) is the 'HIGH' region element. Positions 265–269 (KLSKR) match the 'KMSKS' region motif. Lys268 serves as a coordination point for ATP.

It belongs to the class-I aminoacyl-tRNA synthetase family. Glutamate--tRNA ligase type 1 subfamily. As to quaternary structure, monomer.

It localises to the cytoplasm. It catalyses the reaction tRNA(Glu) + L-glutamate + ATP = L-glutamyl-tRNA(Glu) + AMP + diphosphate. Its function is as follows. Catalyzes the attachment of glutamate to tRNA(Glu) in a two-step reaction: glutamate is first activated by ATP to form Glu-AMP and then transferred to the acceptor end of tRNA(Glu). The polypeptide is Glutamate--tRNA ligase (Mycobacterium leprae (strain TN)).